The sequence spans 811 residues: E3 ubiquitin-protein ligase RNF10 (811 aa).

The segment covering 1-10 (MPLSSPNAAA) has biased composition (polar residues). The segment at 1–119 (MPLSSPNAAA…SFNGGRRDEV (119 aa)) is disordered. Residue Ser-5 is modified to Phosphoserine. 3 stretches are compositionally biased toward low complexity: residues 18-31 (NSGS…SGSS), 78-90 (NNQS…QKSK), and 104-113 (SKLFSSSFNG). Residues 101–185 (GGSSKLFSSS…FNKELFLQAN (85 aa)) are interaction with MEOX2. Phosphoserine is present on residues Ser-110 and Ser-128. Residues 225 to 267 (CPICLYPPTAAKITRCGHIFCWACILHYLSLSEKTWSKCPICY) form an RING-type zinc finger. The span at 653–662 (DSALGPTSTE) shows a compositional bias: polar residues. Disordered stretches follow at residues 653-672 (DSAL…ISPL), 724-761 (DVWP…VPSF), and 776-811 (LDTP…VHTK). Basic and acidic residues predominate over residues 724–736 (DVWPKTAPKKDEN). A compositionally biased stretch (polar residues) spans 802-811 (LFSTSVVHTK).

The protein belongs to the RNF10 family. In terms of assembly, interacts with MEOX2.

Its subcellular location is the cytoplasm. It localises to the nucleus. It carries out the reaction S-ubiquitinyl-[E2 ubiquitin-conjugating enzyme]-L-cysteine + [acceptor protein]-L-lysine = [E2 ubiquitin-conjugating enzyme]-L-cysteine + N(6)-ubiquitinyl-[acceptor protein]-L-lysine.. It functions in the pathway protein modification; protein ubiquitination. E3 ubiquitin-protein ligase that catalyzes monoubiquitination of 40S ribosomal proteins RPS2/us5 and RPS3/us3 in response to ribosome stalling. Part of a ribosome quality control that takes place when ribosomes have stalled during translation initiation (iRQC): RNF10 acts by mediating monoubiquitination of RPS2/us5 and RPS3/us3, promoting their degradation by the proteasome. Also promotes ubiquitination of 40S ribosomal proteins in response to ribosome stalling during translation elongation. The action of RNF10 in iRQC is counteracted by USP10. May also act as a transcriptional factor involved in the regulation of MAG (Myelin-associated glycoprotein) expression. Acts as a regulator of Schwann cell differentiation and myelination. The polypeptide is E3 ubiquitin-protein ligase RNF10 (Homo sapiens (Human)).